The following is a 709-amino-acid chain: FACT complex subunit SSRP1 (709 aa).

Ala-2 carries the N-acetylalanine modification. Lys-90 is covalently cross-linked (Glycyl lysine isopeptide (Lys-Gly) (interchain with G-Cter in SUMO2)). The residue at position 170 (Thr-170) is a Phosphothreonine. Lys-233 is modified (N6-acetyllysine). Glycyl lysine isopeptide (Lys-Gly) (interchain with G-Cter in SUMO2) cross-links involve residues Lys-296 and Lys-364. An N6-acetyllysine modification is found at Lys-413. Ser-437 bears the Phosphoserine mark. Tyr-441 is modified (phosphotyrosine). Phosphoserine is present on Ser-444. At Tyr-452 the chain carries Phosphotyrosine. The segment at 458-709 (EEGKIREENA…SEDSASGSDE (252 aa)) is disordered. The span at 470 to 496 (SSDDSGEETDESFNPGEEEEDVAEEFD) shows a compositional bias: acidic residues. Phosphoserine is present on Ser-471. Over residues 497-507 (SNASASSSSNE) the composition is skewed to low complexity. Position 510 is a phosphoserine; by CK2 (Ser-510). A compositionally biased stretch (basic residues) spans 515–533 (KKRKQLKKAKMAKDRKSRK). Composition is skewed to basic and acidic residues over residues 534 to 546 (KPVEVKKGKDPNA) and 577 to 624 (LSKK…SSKR). Position 542 is an N6-acetyllysine (Lys-542). Positions 547–615 (PKRPMSAYML…DYEKAMKEYE (69 aa)) form a DNA-binding region, HMG box. Basic residues predominate over residues 625–634 (DKSKKKKKVK). Low complexity predominate over residues 643–659 (PSRGSSSKSSSRQLSES). Phosphoserine occurs at positions 657, 659, 667, 668, 671, 672, and 673. Phosphoserine; by CK2 is present on Ser-688. The segment covering 696 to 709 (TPPSSEDSASGSDE) has biased composition (polar residues).

The protein belongs to the SSRP1 family. Interacts with MYOG (via C-terminal region). Component of the FACT complex, a stable heterodimer of SSRP1 and SUPT16H. Also a component of a CK2-SPT16-SSRP1 complex which forms following UV irradiation, composed of SSRP1, SUPT16H, CSNK2A1, CSNK2A2 and CSNK2B. Binds to histone H3-H4 tetramers, but not to intact nucleosomes. Identified in a centromere complex containing histones H2A, H2B and H4, and at least CENPA, CENPB, CENPC, CENPT, CENPN, HJURP, SUPT16H, SSRP1 and RSF1. Interacts with isoform gamma of TP63. Interacts with FYTTD1/UIF. Interacts with SRF. Interacts with NEK9. In terms of assembly, (Microbial infection) Interacts with Herpes simplex virus 1 (HHV-1) protein ICP22; this interaction relocalizes the FACT complex to viral genomes in infected cells. In terms of processing, phosphorylated by CK2 following UV but not gamma irradiation. Phosphorylation inhibits its DNA-binding activity. Ubiquitinated. Polyubiquitinated following caspase cleavage resulting in degradation of the N-terminal ubiquitinated part of the cleaved protein. Post-translationally, sumoylated.

Its subcellular location is the nucleus. It localises to the nucleolus. The protein resides in the chromosome. Functionally, component of the FACT complex, a general chromatin factor that acts to reorganize nucleosomes. The FACT complex is involved in multiple processes that require DNA as a template such as mRNA elongation, DNA replication and DNA repair. During transcription elongation the FACT complex acts as a histone chaperone that both destabilizes and restores nucleosomal structure. It facilitates the passage of RNA polymerase II and transcription by promoting the dissociation of one histone H2A-H2B dimer from the nucleosome, then subsequently promotes the reestablishment of the nucleosome following the passage of RNA polymerase II. The FACT complex is probably also involved in phosphorylation of 'Ser-392' of p53/TP53 via its association with CK2 (casein kinase II). Binds specifically to double-stranded DNA and at low levels to DNA modified by the antitumor agent cisplatin. May potentiate cisplatin-induced cell death by blocking replication and repair of modified DNA. Also acts as a transcriptional coactivator for p63/TP63. The protein is FACT complex subunit SSRP1 (SSRP1) of Homo sapiens (Human).